A 107-amino-acid chain; its full sequence is Ig kappa chain V-VI region NQ5-78.2.6 (107 aa).

The segment at 1-23 (QILLTQSPAIMSASPGQKVTMTC) is framework-1. Cys-23 and Cys-87 are joined by a disulfide. The complementarity-determining-1 stretch occupies residues 24-33 (SASSSVSYMH). Positions 34-48 (WYQQKSGTSPKRWIY) are framework-2. A complementarity-determining-2 region spans residues 49-55 (DTSKLAS). Positions 56–87 (GVPARFXGSGSATSYSLTITSMQAEDAATYYC) are framework-3. Residues 88–96 (QQWSSNPLT) form a complementarity-determining-3 region. The interval 97–106 (FGSGTKLEXK) is framework-4.

Its function is as follows. Anti-2-phenyl oxazolone (PHOX) Antibody. The sequence is that of Ig kappa chain V-VI region NQ5-78.2.6 from Mus musculus (Mouse).